Reading from the N-terminus, the 435-residue chain is Chromatin structure-remodeling complex subunit RSC7 (435 aa).

Residues 1–97 form a disordered region; that stretch reads MSDSEGGLAS…DKGVTRSRNR (97 aa). The span at 30–66 shows a compositional bias: acidic residues; the sequence is DTEDLDIDENDENEDDDYREEEANEGVNEEEISDEEE. A Phosphoserine modification is found at serine 86. The tract at residues 248–435 is functional region; able to complement all NPL6 null allele phenotypes; sequence ELRTKGNVIE…QNFEKCNEYI (188 aa).

It belongs to the RSC7/SWP82 family. RSC7 subfamily. In terms of assembly, interacts with ARP7, ARP9, RSC3, RSC8, RSC30 and STH1. Component of the two forms of the RSC complex composed of at least either RSC1 or RSC2, and ARP7, ARP9, LDB7, NPL6, RSC3, RSC30, RSC4, RSC58, RSC6, RSC8, RSC9, SFH1, STH1, HTL1 and probably RTT102. The complexes interact with histone and histone variant components of centromeric chromatin. Component of a fungal-specific module (HTL1-LDB7-NPL6-RSC3-RSC30) within the RSC complex.

It localises to the nucleus. Functionally, component of the chromatin structure remodeling complex (RSC), which is involved in transcription regulation and nucleosome positioning. RSC is responsible for the transfer of a histone octamer from a nucleosome core particle to naked DNA. The reaction requires ATP and involves an activated RSC-nucleosome intermediate. Remodeling reaction also involves DNA translocation, DNA twist and conformational change. As a reconfigurer of centromeric and flanking nucleosomes, RSC complex is required both for proper kinetochore function in chromosome segregation and, via a PKC1-dependent signaling pathway, for organization of the cellular cytoskeleton. Together with HTL1, LDB7, RSC3, RSC30 components, defines a fungal-specific module within the RSC complex that plays a role in many cellular functions including the maintenance of cell wall integrity. Acidic protein important for nuclear protein localization. This chain is Chromatin structure-remodeling complex subunit RSC7 (NPL6), found in Saccharomyces cerevisiae (strain ATCC 204508 / S288c) (Baker's yeast).